The chain runs to 328 residues: MADPSFFVGIVGNVISILVFASPIATFRRIVRSKSTEEFRWLPYVTTLLSTSLWTFYGLHKPGGLLIVTVNGSGAALEAIYVTLYLAYAPRETKAKMVKVVLAVNVGALAAVVAVALVALHGGVRLFVVGVLCAALTIGMYAAPMAAMRTVVKTRSVEYMPFSLSFFLFLNGGVWSVYSLLVKDYFIGIPNAIGFALGTAQLALYMAYRRTKKPAGKGGDDDEDDEEAQGVARLMGHQVEMAQQRRDQQLRKGLSLSLPKPAAPLHGGLDRIIKSFSTTPIELHSILHQHHGGHHHHHRFDTVPDDDDEAVAAGGTTPATTAGPGDRH.

The Extracellular segment spans residues 1–5 (MADPS). A helical transmembrane segment spans residues 6 to 26 (FFVGIVGNVISILVFASPIAT). Residues 6–92 (FFVGIVGNVI…TLYLAYAPRE (87 aa)) enclose the MtN3/slv 1 domain. The Cytoplasmic portion of the chain corresponds to 27 to 38 (FRRIVRSKSTEE). Residues 39–56 (FRWLPYVTTLLSTSLWTF) form a helical membrane-spanning segment. At 57-63 (YGLHKPG) the chain is on the extracellular side. The chain crosses the membrane as a helical span at residues 64 to 84 (GLLIVTVNGSGAALEAIYVTL). Over 85-99 (YLAYAPRETKAKMVK) the chain is Cytoplasmic. The helical transmembrane segment at 100 to 120 (VVLAVNVGALAAVVAVALVAL) threads the bilayer. Residues 121–125 (HGGVR) lie on the Extracellular side of the membrane. Residues 126–146 (LFVVGVLCAALTIGMYAAPMA) traverse the membrane as a helical segment. The MtN3/slv 2 domain occupies 127-213 (FVVGVLCAAL…LYMAYRRTKK (87 aa)). The Cytoplasmic segment spans residues 147-161 (AMRTVVKTRSVEYMP). Residues 162 to 182 (FSLSFFLFLNGGVWSVYSLLV) traverse the membrane as a helical segment. At 183-185 (KDY) the chain is on the extracellular side. Residues 186–206 (FIGIPNAIGFALGTAQLALYM) traverse the membrane as a helical segment. Residues 207 to 328 (AYRRTKKPAG…ATTAGPGDRH (122 aa)) lie on the Cytoplasmic side of the membrane. Residues 288–299 (HQHHGGHHHHHR) show a composition bias toward basic residues. Positions 288–328 (HQHHGGHHHHHRFDTVPDDDDEAVAAGGTTPATTAGPGDRH) are disordered. Low complexity predominate over residues 312 to 328 (AAGGTTPATTAGPGDRH).

Belongs to the SWEET sugar transporter family. As to quaternary structure, forms homooligomers and/or heterooligomers.

The protein localises to the cell membrane. Mediates both low-affinity uptake and efflux of sugar across the plasma membrane. The protein is Bidirectional sugar transporter SWEET16 (SWEET16) of Oryza sativa subsp. japonica (Rice).